Here is a 530-residue protein sequence, read N- to C-terminus: MKFKKIILALACLSSPLYADQDQQLKSEIQRLQHQAEDLQAQLNRLQKQLANHKSSQQKHEQQAAAKPAEPQSKPTVKSGAAIEEKYHSSKVEVHAPDAHPESISFYPTALIADNRVVTYIAGTPVVSSPFLGDRPAFDGSDYIVNISSINRDVRLMQQRRRLYRAYQKIGYPIPNMPIISLSGKAEPAATFNNPFRSTNTDGDITLGSSELDVAAALNENVEAYIAIAYDESPPAIGPRVNNSAFNLNMGFVNIGNLDKSPLYFTAGQVYVPFGRYSSAMVSSPVTMNLARTKTRPVIFGYKSQADTGPFGAVYGYRSDTTLGRSGVGGVNLGYIFGFDNDINGEVGGGFISSIADAGGMQSTGANVGTTFGGFGSITNGNENVRKTKAADVHGHVGYDRYNLTLEWVGAIQSFRPQDLSFNGQGARPQAAQAELGMTFMAFNRPASIGVGYQWTKEALALNLPKRRYVGVFNISIWKDTVESIEYRHDIDYGLTQFANGAAPQGFVNLPTLGTGKSADTVSAQIGVYF.

Positions 1–19 (MKFKKIILALACLSSPLYA) are cleaved as a signal peptide. Residues 20–66 (DQDQQLKSEIQRLQHQAEDLQAQLNRLQKQLANHKSSQQKHEQQAAA) are a coiled coil. Residues 50 to 81 (LANHKSSQQKHEQQAAAKPAEPQSKPTVKSGA) form a disordered region. A compositionally biased stretch (low complexity) spans 63 to 75 (QAAAKPAEPQSKP).

Belongs to the UPF0422 family.

The sequence is that of UPF0422 protein lpg2959 from Legionella pneumophila subsp. pneumophila (strain Philadelphia 1 / ATCC 33152 / DSM 7513).